A 281-amino-acid polypeptide reads, in one-letter code: DegV domain-containing protein DR_1986 (281 aa).

One can recognise a DegV domain in the interval 3-278 (IAIVTDSTSD…PGAVGVALEP (276 aa)). The hexadecanoate site is built by T61 and S93.

Its function is as follows. May bind long-chain fatty acids, such as palmitate, and may play a role in lipid transport or fatty acid metabolism. The protein is DegV domain-containing protein DR_1986 of Deinococcus radiodurans (strain ATCC 13939 / DSM 20539 / JCM 16871 / CCUG 27074 / LMG 4051 / NBRC 15346 / NCIMB 9279 / VKM B-1422 / R1).